The following is a 390-amino-acid chain: Flavohemoprotein (390 aa).

Serine 2 carries the post-translational modification N-acetylserine. Positions 12–149 constitute a Globin domain; that stretch reads PLTPTEINFL…LAQTLIDAEA (138 aa). Position 96 (histidine 96) interacts with heme b. Active-site charge relay system residues include tyrosine 106 and glutamate 148. The interval 157–390 is reductase; the sequence is WEEFKDFRVT…EFFGPTDPDC (234 aa). In terms of domain architecture, FAD-binding FR-type spans 158-263; the sequence is EEFKDFRVTK…HAPVGTMKYD (106 aa). Residues tyrosine 196 and 214-217 each bind FAD; that span reads REYS. Residue 277 to 282 participates in NADP(+) binding; sequence GIGITP. 382–385 is a binding site for FAD; the sequence is FFGP.

It belongs to the globin family. Two-domain flavohemoproteins subfamily. In the C-terminal section; belongs to the flavoprotein pyridine nucleotide cytochrome reductase family. FAD serves as cofactor. Requires heme b as cofactor.

The protein localises to the cytoplasm. The enzyme catalyses 2 nitric oxide + NADPH + 2 O2 = 2 nitrate + NADP(+) + H(+). It catalyses the reaction 2 nitric oxide + NADH + 2 O2 = 2 nitrate + NAD(+) + H(+). Its function is as follows. Is involved in NO detoxification in an aerobic process, termed nitric oxide dioxygenase (NOD) reaction that utilizes O(2) and NAD(P)H to convert NO to nitrate, which protects the fungus from various noxious nitrogen compounds. Therefore, plays a central role in the inducible response to nitrosative stress. Functionally, in the presence of oxygen and NADH, it has NADH oxidase activity, which leads to the generation of superoxide and H(2)O(2). Under anaerobic conditions, it also exhibits nitric oxide reductase and FAD reductase activities. However, all these reactions are much lower than NOD activity. The protein is Flavohemoprotein of Candida norvegensis (Yeast).